We begin with the raw amino-acid sequence, 353 residues long: GTPase Obg (353 aa).

Residues 1–159 form the Obg domain; that stretch reads MKFLDEAKVY…RWIWLRLKLI (159 aa). In terms of domain architecture, OBG-type G spans 160–327; that stretch reads ADAGLVGLPN…ALRALAAVIG (168 aa). GTP-binding positions include 166–173, 191–195, 212–215, 279–282, and 308–310; these read GLPNAGKS, FTTLH, DIPG, NKID, and SGI. Mg(2+)-binding residues include serine 173 and threonine 193. A disordered region spans residues 332-353; sequence SDKAKGAADNAANAEPWAPQDA.

Belongs to the TRAFAC class OBG-HflX-like GTPase superfamily. OBG GTPase family. Monomer. It depends on Mg(2+) as a cofactor.

The protein localises to the cytoplasm. Its function is as follows. An essential GTPase which binds GTP, GDP and possibly (p)ppGpp with moderate affinity, with high nucleotide exchange rates and a fairly low GTP hydrolysis rate. Plays a role in control of the cell cycle, stress response, ribosome biogenesis and in those bacteria that undergo differentiation, in morphogenesis control. This chain is GTPase Obg, found in Rhodopseudomonas palustris (strain HaA2).